Consider the following 410-residue polypeptide: Arginine deiminase (410 aa).

Cys400 acts as the Amidino-cysteine intermediate in catalysis.

This sequence belongs to the arginine deiminase family.

The protein localises to the cytoplasm. The enzyme catalyses L-arginine + H2O = L-citrulline + NH4(+). It participates in amino-acid degradation; L-arginine degradation via ADI pathway; carbamoyl phosphate from L-arginine: step 1/2. This Streptococcus agalactiae serotype Ia (strain ATCC 27591 / A909 / CDC SS700) protein is Arginine deiminase.